We begin with the raw amino-acid sequence, 88 residues long: Large ribosomal subunit protein bL27 (88 aa).

The disordered stretch occupies residues 1 to 24 (MAHKKGTGSTRNGRDSNAKRLGVK).

Belongs to the bacterial ribosomal protein bL27 family.

This is Large ribosomal subunit protein bL27 from Synechococcus sp. (strain CC9605).